The following is a 723-amino-acid chain: LIM domain-binding protein 3 (723 aa).

Residues 1–84 (MSYSVTLTGP…NLSLTLQKSK (84 aa)) enclose the PDZ domain. Phosphoserine occurs at positions 44, 98, and 112. Disordered stretches follow at residues 89 to 134 (ISTT…GALE) and 164 to 193 (SPVA…RQYN). T119 is modified (phosphothreonine). Residues S121 and S123 each carry the phosphoserine modification. S214 carries the post-translational modification Phosphoserine. R216 is subject to Omega-N-methylarginine. Phosphoserine is present on residues S220, S251, and D288. 2 disordered regions span residues 280-423 (GTEY…YSPT) and 436-525 (SPAP…PQVT). A291 carries the omega-N-methylarginine modification. Residues 309–376 (ATSPLLPASA…AAAASPAPSA (68 aa)) are compositionally biased toward low complexity. Phosphoserine is present on I327. The residue at position 330 (S330) is an Omega-N-methylarginine. Over residues 436–466 (SPAPTYTPSPAPTYSPSPAPAYTPSPAPNYT) the composition is skewed to pro residues. Residues 490–509 (DSFSQKFAPGKSTTTVSKQT) show a composition bias toward polar residues. Omega-N-methylarginine occurs at positions 512 and 529. LIM zinc-binding domains lie at 545–603 (PLCG…QFFA), 604–663 (PICA…LFST), and 664–723 (KCHG…AINV).

As to quaternary structure, interacts via its LIM domains with various PKC isoforms. Interacts via its PDZ domain with the ACTN2 C-terminal region. Interacts with MYOZ1, MYOZ2 and MYOZ3. In terms of tissue distribution, expressed primarily in adult heart and skeletal muscle, and detected at lower levels in lung. Isoforms are expressed in a tissue-specific manner. Isoform 1, isoform 3 and isoform 5 are expressed in heart, whereas isoform 2, isoform 4 and isoform 6 are expressed in skeletal muscle.

The protein localises to the cytoplasm. It localises to the perinuclear region. The protein resides in the cell projection. It is found in the pseudopodium. Its subcellular location is the cytoskeleton. The protein localises to the myofibril. It localises to the sarcomere. The protein resides in the z line. In terms of biological role, may function as an adapter in striated muscle to couple protein kinase C-mediated signaling via its LIM domains to the cytoskeleton. This is LIM domain-binding protein 3 from Mus musculus (Mouse).